Consider the following 330-residue polypeptide: G-protein coupled receptor 3 (330 aa).

Residues 1-42 (MMWGAGSPLAWLSAGSGNVNVSSVGPAEGPTGPAAPLPSPKA) lie on the Extracellular side of the membrane. The N-linked (GlcNAc...) asparagine glycan is linked to Asn-20. The helical transmembrane segment at 43-62 (WDVVLCISGTLVSCENALVV) threads the bilayer. The Cytoplasmic portion of the chain corresponds to 63–74 (AIIVGTPAFRAP). A helical membrane pass occupies residues 75 to 98 (MFLLVGSLAVADLLAGLGLVLHFA). The Extracellular portion of the chain corresponds to 99 to 110 (AVFCIGSAEMSL). Residues 111–132 (VLVGVLAMAFTASIGSLLAITV) traverse the membrane as a helical segment. Topologically, residues 133–153 (DRYLSLYNALTYYSETTVTRT) are cytoplasmic. A helical membrane pass occupies residues 154 to 173 (YVMLALVWGGALGLGLLPVL). Residues 174–198 (AWNCLDGLTTCGVVYPLSKNHLVVL) are Extracellular-facing. A helical membrane pass occupies residues 199–217 (AIAFFMVFGIMLQLYAQIC). Residues 218–245 (RIVCRHAQQIALQRHLLPASHYVATRKG) lie on the Cytoplasmic side of the membrane. A helical membrane pass occupies residues 246 to 272 (IATLAVVLGAFAACWLPFTVYCLLGDA). Topologically, residues 273–277 (HSPPL) are extracellular. The chain crosses the membrane as a helical span at residues 278–299 (YTYLTLLPATYNSMINPIIYAF). Topologically, residues 300 to 330 (RNQDVQKVLWAVCCCCSSSKIPFRSRSPSDV) are cytoplasmic. A lipid anchor (S-palmitoyl cysteine) is attached at Cys-313. Ser-324, Ser-326, and Ser-328 each carry phosphoserine.

Belongs to the G-protein coupled receptor 1 family. As to expression, expressed predominantly in the central nervous system, and at low levels in the lung, kidney, testis, ovary and eye. Highly expressed in regions of the brain implicated in the Alzheimer disease.

It localises to the cell membrane. Constitutively active G-protein coupled receptor that maintains high 3'-5'-cyclic adenosine monophosphate (cAMP) levels that a plays a role in serveral processes including meiotic arrest in oocytes or neuronal development via activation of numerous intracellular signaling pathways. Acts as an essential activator of thermogenic adipocytes and drives thermogenesis via its intrinsic G(s)-coupling activity without the requirement of a ligand. Has a potential role in modulating a number of brain functions, including behavioral responses to stress, amyloid-beta peptide generation in neurons. Stimulates neurite outgrowth in cerebellar granular neurons modulated via PKA, ERK, and most strongly PI3K-mediated signaling pathways. In Homo sapiens (Human), this protein is G-protein coupled receptor 3 (GPR3).